The chain runs to 326 residues: Aspartate carbamoyltransferase catalytic subunit (326 aa).

Arg76 and Thr77 together coordinate carbamoyl phosphate. Lys104 serves as a coordination point for L-aspartate. Residues Arg126, His156, and Gln159 each coordinate carbamoyl phosphate. L-aspartate is bound by residues Arg189 and Arg244. Carbamoyl phosphate is bound by residues Gly285 and Pro286.

The protein belongs to the aspartate/ornithine carbamoyltransferase superfamily. ATCase family. Heterododecamer (2C3:3R2) of six catalytic PyrB chains organized as two trimers (C3), and six regulatory PyrI chains organized as three dimers (R2).

It catalyses the reaction carbamoyl phosphate + L-aspartate = N-carbamoyl-L-aspartate + phosphate + H(+). Its pathway is pyrimidine metabolism; UMP biosynthesis via de novo pathway; (S)-dihydroorotate from bicarbonate: step 2/3. Catalyzes the condensation of carbamoyl phosphate and aspartate to form carbamoyl aspartate and inorganic phosphate, the committed step in the de novo pyrimidine nucleotide biosynthesis pathway. This chain is Aspartate carbamoyltransferase catalytic subunit, found in Polynucleobacter asymbioticus (strain DSM 18221 / CIP 109841 / QLW-P1DMWA-1) (Polynucleobacter necessarius subsp. asymbioticus).